Consider the following 100-residue polypeptide: Mitochondrial import inner membrane translocase subunit Tim10 B (100 aa).

The Twin CX3C motif motif lies at Cys-25 to Cys-49. Disulfide bonds link Cys-25–Cys-49 and Cys-29–Cys-45.

It belongs to the small Tim family. In terms of assembly, component of the TIM22 complex, which core is composed of TIMM22, associated with TIMM10 (TIMM10A and/or TIMM10B), TIMM9, AGK and TIMM29.

It localises to the mitochondrion inner membrane. Functionally, component of the TIM22 complex, a complex that mediates the import and insertion of multi-pass transmembrane proteins into the mitochondrial inner membrane. The TIM22 complex forms a twin-pore translocase that uses the membrane potential as the external driving force. In the TIM22 complex, it may act as a docking point for the soluble 70 kDa complex that guides the target proteins in transit through the aqueous mitochondrial intermembrane space. In Mus musculus (Mouse), this protein is Mitochondrial import inner membrane translocase subunit Tim10 B (Timm10b).